A 299-amino-acid chain; its full sequence is Putative cuticle collagen 155 (299 aa).

Residues Met1–Ser27 form the signal peptide. Triple-helical region stretches follow at residues Gly103 to Pro132, Gly151 to Asp177, Gly181 to Gly202, and Gly216 to Lys278. Residues Pro107–Lys278 are disordered. A compositionally biased stretch (pro residues) spans Pro129–Pro161. Over residues Gly163 to Gly172 the composition is skewed to gly residues. Over residues Ser173 to Ala197 the composition is skewed to low complexity. Residues Pro215–Pro233 are compositionally biased toward pro residues. Positions Pro250–Gln268 are enriched in low complexity.

The protein belongs to the cuticular collagen family. Collagen polypeptide chains are complexed within the cuticle by disulfide bonds and other types of covalent cross-links.

Nematode cuticles are composed largely of collagen-like proteins. The cuticle functions both as an exoskeleton and as a barrier to protect the worm from its environment. The chain is Putative cuticle collagen 155 (col-155) from Caenorhabditis elegans.